Consider the following 217-residue polypeptide: Large ribosomal subunit protein uL29m (217 aa).

Belongs to the universal ribosomal protein uL29 family. Component of the mitochondrial large ribosomal subunit. Mature mitochondrial ribosomes consist of a small (37S) and a large (54S) subunit. The 37S subunit contains at least 33 different proteins and 1 molecule of RNA (15S). The 54S subunit contains at least 45 different proteins and 1 molecule of RNA (21S).

It is found in the mitochondrion. The protein is Large ribosomal subunit protein uL29m (mrpl4) of Aspergillus clavatus (strain ATCC 1007 / CBS 513.65 / DSM 816 / NCTC 3887 / NRRL 1 / QM 1276 / 107).